Reading from the N-terminus, the 252-residue chain is 3-dehydroquinate dehydratase (252 aa).

3-dehydroquinate-binding positions include serine 21, glutamate 46 to arginine 48, and arginine 82. Histidine 143 (proton donor/acceptor) is an active-site residue. The active-site Schiff-base intermediate with substrate is lysine 170. 3-dehydroquinate is bound by residues arginine 213, serine 232, and glutamine 236.

This sequence belongs to the type-I 3-dehydroquinase family. In terms of assembly, homodimer.

It catalyses the reaction 3-dehydroquinate = 3-dehydroshikimate + H2O. Its pathway is metabolic intermediate biosynthesis; chorismate biosynthesis; chorismate from D-erythrose 4-phosphate and phosphoenolpyruvate: step 3/7. Its function is as follows. Involved in the third step of the chorismate pathway, which leads to the biosynthesis of aromatic amino acids. Catalyzes the cis-dehydration of 3-dehydroquinate (DHQ) and introduces the first double bond of the aromatic ring to yield 3-dehydroshikimate. The polypeptide is 3-dehydroquinate dehydratase (Escherichia coli (strain K12 / MC4100 / BW2952)).